The chain runs to 139 residues: Large ribosomal subunit protein bL17 (139 aa).

This sequence belongs to the bacterial ribosomal protein bL17 family. In terms of assembly, part of the 50S ribosomal subunit. Contacts protein L32.

The polypeptide is Large ribosomal subunit protein bL17 (Cereibacter sphaeroides (strain ATCC 17025 / ATH 2.4.3) (Rhodobacter sphaeroides)).